A 338-amino-acid polypeptide reads, in one-letter code: D-erythrose-4-phosphate dehydrogenase (338 aa).

Residue 11 to 12 (RI) coordinates NAD(+). Substrate is bound by residues 153-155 (SCT), Arg-199, 212-213 (TK), and Arg-235. The active-site Nucleophile is the Cys-154. Asn-317 serves as a coordination point for NAD(+).

This sequence belongs to the glyceraldehyde-3-phosphate dehydrogenase family. Epd subfamily. In terms of assembly, homotetramer.

The protein localises to the cytoplasm. The catalysed reaction is D-erythrose 4-phosphate + NAD(+) + H2O = 4-phospho-D-erythronate + NADH + 2 H(+). Its pathway is cofactor biosynthesis; pyridoxine 5'-phosphate biosynthesis; pyridoxine 5'-phosphate from D-erythrose 4-phosphate: step 1/5. In terms of biological role, catalyzes the NAD-dependent conversion of D-erythrose 4-phosphate to 4-phosphoerythronate. In Shewanella amazonensis (strain ATCC BAA-1098 / SB2B), this protein is D-erythrose-4-phosphate dehydrogenase.